The primary structure comprises 519 residues: ATP synthase subunit alpha, mitochondrial (519 aa).

188–195 contacts ATP; it reads GDRQTGKS.

This sequence belongs to the ATPase alpha/beta chains family. F-type ATPases have 2 components, CF(1) - the catalytic core - and CF(0) - the membrane proton channel. CF(1) has five subunits: alpha(3), beta(3), gamma(1), delta(1), epsilon(1). CF(0) has three main subunits: a, b and c.

The protein localises to the mitochondrion. It is found in the mitochondrion inner membrane. Functionally, mitochondrial membrane ATP synthase (F(1)F(0) ATP synthase or Complex V) produces ATP from ADP in the presence of a proton gradient across the membrane which is generated by electron transport complexes of the respiratory chain. F-type ATPases consist of two structural domains, F(1) - containing the extramembraneous catalytic core, and F(0) - containing the membrane proton channel, linked together by a central stalk and a peripheral stalk. During catalysis, ATP synthesis in the catalytic domain of F(1) is coupled via a rotary mechanism of the central stalk subunits to proton translocation. Subunits alpha and beta form the catalytic core in F(1). Rotation of the central stalk against the surrounding alpha(3)beta(3) subunits leads to hydrolysis of ATP in three separate catalytic sites on the beta subunits. Subunit alpha does not bear the catalytic high-affinity ATP-binding sites. This Dictyostelium citrinum (Slime mold) protein is ATP synthase subunit alpha, mitochondrial (atp1).